We begin with the raw amino-acid sequence, 292 residues long: Small ribosomal subunit protein uS2 (292 aa).

Residues 230–292 (RSGGAPGSEK…KKEAGSGEEA (63 aa)) form a disordered region. 2 stretches are compositionally biased toward basic and acidic residues: residues 247–259 (EWERELLEGKTEA) and 271–292 (PAKEEKAQAPEEKKEAGSGEEA).

Belongs to the universal ribosomal protein uS2 family.

The sequence is that of Small ribosomal subunit protein uS2 from Thermobifida fusca (strain YX).